The chain runs to 364 residues: MRFVDEVTISVSAGKGGNGCVSFRREKFIPKGGPNGGDGGDGGNIIFKADSRLLTLYDFRVQRHYRAQNGEGGKGSQRHGKKGEDLILHLPVGTIIFEQLLDKEYFLVDLDRPGVEFLIARGGRGGKGNEHFKSSTMRTPRFAQKGEMGEEKYLRLELKILADAGIIGLPNAGKSTLISKLSAAQPKIAAYPFTTLNPNLGVMIDNLDPDKRLVLADIPGLIEGACKGQGLGHQFLKHIERTRFLIHVLSSEDIDEDNPWLGFDIVNEELKEFDHTLMQRTQLLVVNKIDVLQPEKLSHIKQVAESSGKIIYFISAETGEGIELLVDAIWKLQSYRLNAPFIHLKPIEHKSDEEFAIEVAYTKE.

An Obg domain is found at 1-161; the sequence is MRFVDEVTIS…KYLRLELKIL (161 aa). The OBG-type G domain occupies 162-334; the sequence is ADAGIIGLPN…LVDAIWKLQS (173 aa). GTP is bound by residues 168-175, 193-197, 217-220, 287-290, and 315-317; these read GLPNAGKS, FTTLN, DIPG, NKID, and SAE. The Mg(2+) site is built by Ser175 and Thr195.

This sequence belongs to the TRAFAC class OBG-HflX-like GTPase superfamily. OBG GTPase family. As to quaternary structure, monomer. Mg(2+) serves as cofactor.

The protein resides in the cytoplasm. An essential GTPase which binds GTP, GDP and possibly (p)ppGpp with moderate affinity, with high nucleotide exchange rates and a fairly low GTP hydrolysis rate. Plays a role in control of the cell cycle, stress response, ribosome biogenesis and in those bacteria that undergo differentiation, in morphogenesis control. The protein is GTPase Obg of Lawsonia intracellularis (strain PHE/MN1-00).